A 31-amino-acid polypeptide reads, in one-letter code: Photosystem II reaction center protein T (31 aa).

A helical transmembrane segment spans residues 3–23; that stretch reads SVAYIIVLAMALSVLFFAIAF.

It belongs to the PsbT family. PSII is composed of 1 copy each of membrane proteins PsbA, PsbB, PsbC, PsbD, PsbE, PsbF, PsbH, PsbI, PsbJ, PsbK, PsbL, PsbM, PsbT, PsbX, PsbY, PsbZ, Psb30/Ycf12, peripheral proteins PsbO, CyanoQ (PsbQ), PsbU, PsbV and a large number of cofactors. It forms dimeric complexes.

Its subcellular location is the cellular thylakoid membrane. In terms of biological role, found at the monomer-monomer interface of the photosystem II (PS II) dimer, plays a role in assembly and dimerization of PSII. PSII is a light-driven water plastoquinone oxidoreductase, using light energy to abstract electrons from H(2)O, generating a proton gradient subsequently used for ATP formation. In Picosynechococcus sp. (strain ATCC 27264 / PCC 7002 / PR-6) (Agmenellum quadruplicatum), this protein is Photosystem II reaction center protein T.